The following is a 348-amino-acid chain: UDP-glucose 4-epimerase (348 aa).

Residues Gly12–Ile14, Asp33–Asn37, Asp66–Ile67, Phe88, and Lys92 contribute to the NAD(+) site. Ser132–Thr134 is a substrate binding site. Catalysis depends on Tyr157, which acts as the Proton acceptor. Residues Lys161 and Tyr185 each coordinate NAD(+). Substrate is bound by residues Tyr185–Asn187, Asn206–Leu208, Asn224–Phe226, Arg239, and Arg300–Asp303.

This sequence belongs to the NAD(P)-dependent epimerase/dehydratase family. In terms of assembly, homodimer. The cofactor is NAD(+).

The enzyme catalyses UDP-alpha-D-glucose = UDP-alpha-D-galactose. It carries out the reaction UDP-N-acetyl-alpha-D-glucosamine = UDP-N-acetyl-alpha-D-galactosamine. It functions in the pathway carbohydrate metabolism; galactose metabolism. Functionally, catalyzes two distinct but analogous reactions: the reversible epimerization of UDP-glucose to UDP-galactose and the reversible epimerization of UDP-N-acetylglucosamine to UDP-N-acetylgalactosamine. The reaction with UDP-Gal plays a critical role in the Leloir pathway of galactose catabolism in which galactose is converted to the glycolytic intermediate glucose 6-phosphate. It contributes to the catabolism of dietary galactose and enables the endogenous biosynthesis of both UDP-Gal and UDP-GalNAc when exogenous sources are limited. Both UDP-sugar interconversions are important in the synthesis of glycoproteins and glycolipids. The chain is UDP-glucose 4-epimerase from Homo sapiens (Human).